Here is a 555-residue protein sequence, read N- to C-terminus: MEIYSPVVPAVKDVKRLDEIRKSAKFHPSIWGDFFLSYNSDNTQISEAEEEEVAKQKEAVRELLAQVPEGSTYKMELIDLIQRLGVNYHFEKEIHDSLNYIHENSQHNDDEVRTTALRFRLLRQQGYRVPCDVFRKFTDGEGNFATALTNDVEGLLELYEASHLATRGEEILDRAMEFSSSHLQALLNQHLVGSVSLSKRVDEALKMPIRKTLTRLGARKFISLYQEDESRNELLLNFAKLDFNMVQKMHQRELSDATRWWKKLEVAKRMPYARDRVVECFFWIVGVYFEPCYATARRILSKAINMASIVDDTYEYATLDELQILTDAIQRWDVNETLEDSPPHVQMCYKALIQAYAEIEDEVVENFGGEELYRVQYAIEHVKQSAVAFFEEAKWIYNNSIPTVEEYMKVAFVTCGYMMLSTTSLVGVGSDRVSKADFDWIVNEPLIVRASCVICRLMDDLVGDEYEEKPSSVLCYMKQYVVSKDEARARLEQQVKDAWKDMNEECIEPRPASMQILTRVLNLGRVIHLLYREGDSYTDPNRSKEWVKMVFVDPI.

Positions 311 and 315 each coordinate Mg(2+). The DDXXD motif signature appears at 311–315 (DDTYE). 2 homodimerization regions span residues 316 to 322 (YATLDEL) and 392 to 429 (EAKW…VGVG). Mg(2+) contacts are provided by Asp459 and Glu467.

This sequence belongs to the terpene synthase family. Homodimer. The cofactor is Mn(2+). Mg(2+) serves as cofactor. As to expression, expressed in peltate glandular trichomes. Present at low levels in flowers, leaves and stems.

It catalyses the reaction (2E,6E)-farnesyl diphosphate = bicyclogermacrene + diphosphate. The catalysed reaction is (2E)-geranyl diphosphate = terpinolene + diphosphate. It carries out the reaction (2E)-geranyl diphosphate = (4R)-limonene + diphosphate. The enzyme catalyses (2E)-geranyl diphosphate + H2O = (2E)-geraniol + diphosphate. It catalyses the reaction (2E,6E)-farnesyl diphosphate = allo-aromadendrene + diphosphate. The protein operates within secondary metabolite biosynthesis; terpenoid biosynthesis. In terms of biological role, involved in the biosynthesis of phenolic sesquiterpenes natural products. Sesquiterpene synthase converting (2E,6E)-farnesyl diphosphate (FPP) to alloaromadendrene and bicyclo-germacrene. The product formation is dependent on the metal ions present and in presence of manganese, bicyclo-germacrene is greatly favored while both alloaromadendrene and bicyclo-germacrene are produced in equivalent amounts in the presence of magnesium. Can also convert geranyl diphosphate (GPP) to terpinolene, limonene and geraniol, and this conversion is not affected by the presence of magnesium or manganese. This Origanum vulgare (Wild marjoram) protein is Bicyclo-germacrene synthase (TPS4).